A 44-amino-acid polypeptide reads, in one-letter code: MKSKLFISLSAVLIGLAFFGSMYNGEMKEASRNVTLAPTHEFLV.

2 consecutive propeptides follow at residues 1 to 30 (MKSK…MKEA) and 36 to 44 (LAPTHEFLV).

This sequence belongs to the Phr family. Contains a predicted signal peptide cleavage site in the N-terminal region, however the propeptide is probably only subject to processing events at the ends of the mature peptide.

It is found in the secreted. The protein localises to the cytoplasm. Signaling molecule involved in the regulation of sporulation. Secreted during production, but the mature peptide acts intracellularly, indicating that it needs to be imported into the cell to function. Inhibitor of the RapE phosphatase activity. Does not inhibit the phosphatase activity of RapA and RapB. Probably plays a dispensable role in the overall context of sporulation initiation. The protein is Phosphatase RapE inhibitor (phrE) of Bacillus subtilis (strain 168).